The primary structure comprises 106 residues: MVNVPKTRRTYCKKCKKHQPHKVTQYKKGKDSLYAQGKRRYDRKQSGYGGQTKPIFRKKAKTTKKIVLRLECVEPNCRSKRMLAIKRCKHFELGGDKKRKGQVIQF.

A disordered region spans residues 26–53; the sequence is YKKGKDSLYAQGKRRYDRKQSGYGGQTK.

This sequence belongs to the eukaryotic ribosomal protein eL42 family. As to quaternary structure, component of the large ribosomal subunit.

Its subcellular location is the cytoplasm. Component of the large ribosomal subunit. The ribosome is a large ribonucleoprotein complex responsible for the synthesis of proteins in the cell. The protein is Large ribosomal subunit protein eL42 (rpl36a) of Danio rerio (Zebrafish).